The following is a 376-amino-acid chain: Sterol 24-C-methyltransferase (376 aa).

This sequence belongs to the class I-like SAM-binding methyltransferase superfamily. Erg6/SMT family.

The enzyme catalyses zymosterol + S-adenosyl-L-methionine = fecosterol + S-adenosyl-L-homocysteine + H(+). It participates in steroid metabolism; ergosterol biosynthesis; ergosterol from zymosterol: step 1/5. With respect to regulation, substrate analogs 25-azalanosterol and 24(R,S),25-epiminolanosterol act as inhibitors. Sterol 24-C-methyltransferase; part of the third module of ergosterol biosynthesis pathway that includes the late steps of the pathway. ERG6 catalyzes the methyl transfer from S-adenosyl-methionine to the C-24 of zymosterol to form fecosterol. The third module or late pathway involves the ergosterol synthesis itself through consecutive reactions that mainly occur in the endoplasmic reticulum (ER) membrane. Firstly, the squalene synthase ERG9 catalyzes the condensation of 2 farnesyl pyrophosphate moieties to form squalene, which is the precursor of all steroids. Squalene synthase is crucial for balancing the incorporation of farnesyl diphosphate (FPP) into sterol and nonsterol isoprene synthesis. Secondly, the squalene epoxidase ERG1 catalyzes the stereospecific oxidation of squalene to (S)-2,3-epoxysqualene, which is considered to be a rate-limiting enzyme in steroid biosynthesis. Then, the lanosterol synthase ERG7 catalyzes the cyclization of (S)-2,3 oxidosqualene to lanosterol, a reaction that forms the sterol core. In the next steps, lanosterol is transformed to zymosterol through a complex process involving various demethylation, reduction and desaturation reactions. The lanosterol 14-alpha-demethylase ERG11 (also known as CYP51) catalyzes C14-demethylation of lanosterol to produce 4,4'-dimethyl cholesta-8,14,24-triene-3-beta-ol, which is critical for ergosterol biosynthesis. The C-14 reductase ERG24 reduces the C14=C15 double bond of 4,4-dimethyl-cholesta-8,14,24-trienol to produce 4,4-dimethyl-cholesta-8,24-dienol. 4,4-dimethyl-cholesta-8,24-dienol is substrate of the C-4 demethylation complex ERG25-ERG26-ERG27 in which ERG25 catalyzes the three-step monooxygenation required for the demethylation of 4,4-dimethyl and 4alpha-methylsterols, ERG26 catalyzes the oxidative decarboxylation that results in a reduction of the 3-beta-hydroxy group at the C-3 carbon to an oxo group, and ERG27 is responsible for the reduction of the keto group on the C-3. ERG28 has a role as a scaffold to help anchor ERG25, ERG26 and ERG27 to the endoplasmic reticulum and ERG29 regulates the activity of the iron-containing C4-methylsterol oxidase ERG25. Then, the sterol 24-C-methyltransferase ERG6 catalyzes the methyl transfer from S-adenosyl-methionine to the C-24 of zymosterol to form fecosterol. The C-8 sterol isomerase ERG2 catalyzes the reaction which results in unsaturation at C-7 in the B ring of sterols and thus converts fecosterol to episterol. The sterol-C5-desaturase ERG3 then catalyzes the introduction of a C-5 double bond in the B ring to produce 5-dehydroepisterol. The C-22 sterol desaturase ERG5 further converts 5-dehydroepisterol into ergosta-5,7,22,24(28)-tetraen-3beta-ol by forming the C-22(23) double bond in the sterol side chain. Finally, ergosta-5,7,22,24(28)-tetraen-3beta-ol is substrate of the C-24(28) sterol reductase ERG4 to produce ergosterol. The polypeptide is Sterol 24-C-methyltransferase (Candida albicans (strain SC5314 / ATCC MYA-2876) (Yeast)).